A 307-amino-acid chain; its full sequence is Elongation factor Ts (307 aa).

The segment at 79–82 (TDFV) is involved in Mg(2+) ion dislocation from EF-Tu.

It belongs to the EF-Ts family.

The protein localises to the cytoplasm. Its function is as follows. Associates with the EF-Tu.GDP complex and induces the exchange of GDP to GTP. It remains bound to the aminoacyl-tRNA.EF-Tu.GTP complex up to the GTP hydrolysis stage on the ribosome. This is Elongation factor Ts from Rhizobium meliloti (strain 1021) (Ensifer meliloti).